A 65-amino-acid polypeptide reads, in one-letter code: Large ribosomal subunit protein uL29 (65 aa).

This sequence belongs to the universal ribosomal protein uL29 family.

In Dehalococcoides mccartyi (strain ATCC BAA-2266 / KCTC 15142 / 195) (Dehalococcoides ethenogenes (strain 195)), this protein is Large ribosomal subunit protein uL29.